Reading from the N-terminus, the 736-residue chain is DNA ligase (736 aa).

NAD(+) is bound by residues 41-45 (DQEYD), 91-92 (SL), and Glu-125. The active-site N6-AMP-lysine intermediate is Lys-127. Arg-148 serves as a coordination point for NAD(+). The interval 170 to 205 (ELTPLPLAGGAGGGPLDDSGSAPTPDPSRRREGKWN) is disordered. The NAD(+) site is built by Glu-215, Lys-347, and Lys-371. The Zn(2+) site is built by Cys-463, Cys-466, Cys-481, and Cys-487. One can recognise a BRCT domain in the interval 656-736 (TLDSPVAGKT…GWAEIVAAAG (81 aa)).

Belongs to the NAD-dependent DNA ligase family. LigA subfamily. Mg(2+) serves as cofactor. It depends on Mn(2+) as a cofactor.

It carries out the reaction NAD(+) + (deoxyribonucleotide)n-3'-hydroxyl + 5'-phospho-(deoxyribonucleotide)m = (deoxyribonucleotide)n+m + AMP + beta-nicotinamide D-nucleotide.. Functionally, DNA ligase that catalyzes the formation of phosphodiester linkages between 5'-phosphoryl and 3'-hydroxyl groups in double-stranded DNA using NAD as a coenzyme and as the energy source for the reaction. It is essential for DNA replication and repair of damaged DNA. This is DNA ligase from Erythrobacter litoralis (strain HTCC2594).